We begin with the raw amino-acid sequence, 2365 residues long: Voltage-dependent T-type calcium channel subunit alpha-1H (2365 aa).

The segment at Met-1–Gly-63 is disordered. Over Met-1–Arg-100 the chain is Cytoplasmic. Residues Gly-16–Pro-36 are compositionally biased toward low complexity. One copy of the I repeat lies at Thr-87–Phe-422. A helical transmembrane segment spans residues Trp-101–Met-119. Residues Phe-120–Asp-141 lie on the Extracellular side of the membrane. Residue Asp-140 participates in Zn(2+) binding. The helical transmembrane segment at Phe-142–Leu-160 threads the bilayer. Residues Phe-161–Asp-169 are Cytoplasmic-facing. The helical transmembrane segment at Thr-170–Met-184 threads the bilayer. At Glu-185 to Val-193 the chain is on the extracellular side. Residues Asp-189 and His-191 each contribute to the Zn(2+) site. N-linked (GlcNAc...) asparagine glycosylation is present at Asn-192. The chain crosses the membrane as a helical span at residues Ser-194–Arg-212. Residues Val-213–Asn-232 are Cytoplasmic-facing. A helical transmembrane segment spans residues Val-233–Ala-253. The Extracellular portion of the chain corresponds to Gly-254 to Tyr-394. The N-linked (GlcNAc...) asparagine glycan is linked to Asn-271. A helical membrane pass occupies residues Asn-395–Ala-419. Over Thr-420–Lys-790 the chain is Cytoplasmic. 3 disordered regions span residues Val-490–Val-573, Pro-618–Pro-656, and Gly-737–Pro-761. Basic residues predominate over residues Gly-500 to Phe-532. Pro residues predominate over residues Pro-557 to Gly-566. A compositionally biased stretch (polar residues) spans Ala-621 to Arg-631. The stretch at Trp-776–Phe-1015 is one II repeat. A helical membrane pass occupies residues Tyr-791–Tyr-811. Residues His-812–Ile-824 lie on the Extracellular side of the membrane. Residues Ser-825–Pro-846 form a helical membrane-spanning segment. Residues Leu-847–Asn-852 are Cytoplasmic-facing. The helical transmembrane segment at Pro-853–Gly-871 threads the bilayer. The Extracellular portion of the chain corresponds to Gln-872–Val-879. A helical transmembrane segment spans residues Leu-880–Val-903. Residues Val-904–Thr-914 lie on the Cytoplasmic side of the membrane. A helical membrane pass occupies residues Phe-915–Gly-935. Over Cys-936–Trp-987 the chain is Extracellular. A helical transmembrane segment spans residues Ala-988–Val-1012. The Cytoplasmic segment spans residues Glu-1013–Val-1301. The disordered stretch occupies residues Pro-1059–Pro-1215. A compositionally biased stretch (low complexity) spans Gly-1130–Arg-1147. The span at Arg-1199–Thr-1209 shows a compositional bias: basic and acidic residues. One copy of the III repeat lies at Asn-1292–Phe-1569. A helical transmembrane segment spans residues Ile-1302–Leu-1324. Residues Glu-1325–Ser-1342 are Extracellular-facing. Residues Asn-1343–Leu-1363 form a helical membrane-spanning segment. Residues Leu-1364 to Ser-1373 lie on the Cytoplasmic side of the membrane. The chain crosses the membrane as a helical span at residues Ser-1374 to Ala-1393. Topologically, residues Val-1394–Arg-1407 are extracellular. Residues Val-1408–Leu-1429 traverse the membrane as a helical segment. The Cytoplasmic portion of the chain corresponds to Val-1430–Arg-1439. Residues Pro-1440–Phe-1463 traverse the membrane as a helical segment. Topologically, residues Lys-1464–Pro-1540 are extracellular. The N-linked (GlcNAc...) asparagine glycan is linked to Asn-1477. A helical transmembrane segment spans residues Trp-1541–Val-1566. At Glu-1567 to Ser-1627 the chain is on the cytoplasmic side. One copy of the IV repeat lies at Asp-1613–Leu-1874. A helical transmembrane segment spans residues His-1628–Glu-1648. Over His-1649–Tyr-1662 the chain is Extracellular. Residues Cys-1663 to Phe-1684 form a helical membrane-spanning segment. At Arg-1685–Arg-1691 the chain is on the cytoplasmic side. Residues Trp-1692 to Glu-1710 form a helical membrane-spanning segment. The Extracellular portion of the chain corresponds to Glu-1711–Ile-1724. A helical membrane pass occupies residues Ile-1725–Ala-1748. The Cytoplasmic segment spans residues Leu-1749–Asn-1762. Residues Leu-1763–Gly-1783 traverse the membrane as a helical segment. At Arg-1784–Leu-1846 the chain is on the extracellular side. The chain crosses the membrane as a helical span at residues Ser-1847–Leu-1874. Over Glu-1875–Val-2365 the chain is Cytoplasmic. 2 stretches are compositionally biased toward polar residues: residues Gln-1897 to Asp-1916 and Val-1967 to Val-1983. 4 disordered regions span residues Gln-1897 to Leu-1920, Val-1967 to Ala-1999, Ala-2053 to Trp-2264, and Glu-2321 to Val-2365. The segment covering Asp-2092 to Glu-2102 has biased composition (acidic residues). A compositionally biased stretch (basic and acidic residues) spans Gly-2172 to Glu-2187.

This sequence belongs to the calcium channel alpha-1 subunit (TC 1.A.1.11) family. CACNA1H subfamily. In terms of assembly, interacts (via N-terminal cytoplasmic domain) with STAC. In terms of processing, in response to raising of intracellular calcium, the T-type channels are activated by CaM-kinase II. Is highly expressed in lumbosacral and thoracolumbar dorsal root ganglion neurons.

It localises to the cell membrane. The enzyme catalyses Ca(2+)(in) = Ca(2+)(out). Voltage-sensitive calcium channel that gives rise to T-type calcium currents. T-type calcium channels belong to the 'low-voltage activated (LVA)' group. A particularity of this type of channel is an opening at quite negative potentials, and a voltage-dependent inactivation. T-type channels serve pacemaking functions in both central neurons and cardiac nodal cells and support calcium signaling in secretory cells and vascular smooth muscle. They may also be involved in the modulation of firing patterns of neurons. In the adrenal zona glomerulosa, participates in the signaling pathway leading to aldosterone production in response to either AGT/angiotensin II, or hyperkalemia. This Mus musculus (Mouse) protein is Voltage-dependent T-type calcium channel subunit alpha-1H (Cacna1h).